A 305-amino-acid polypeptide reads, in one-letter code: 2-methoxy-6-polyprenyl-1,4-benzoquinol methylase, mitochondrial (305 aa).

A mitochondrion-targeting transit peptide spans 1-34 (MSRLRAPVAKFLADGLKGIRSTALAGSRLSNCRY). Residues threonine 117, aspartate 143, and 173 to 174 (NA) each bind S-adenosyl-L-methionine.

It belongs to the class I-like SAM-binding methyltransferase superfamily. MenG/UbiE family. Component of a multi-subunit COQ enzyme complex, composed of at least COQ3, COQ4, COQ5, COQ6, COQ7 and COQ9.

It localises to the mitochondrion inner membrane. It carries out the reaction 2-methoxy-6-(all-trans-decaprenyl)benzene-1,4-diol + S-adenosyl-L-methionine = 5-methoxy-2-methyl-3-(all-trans-decaprenyl)benzene-1,4-diol + S-adenosyl-L-homocysteine + H(+). The protein operates within cofactor biosynthesis; ubiquinone biosynthesis. Functionally, methyltransferase required for the conversion of 2-decaprenyl-6-methoxy-1,4-benzoquinol (DDMQH2) to 2-decaprenyl-3-methyl-6-methoxy-1,4-benzoquinol (DMQH2). The sequence is that of 2-methoxy-6-polyprenyl-1,4-benzoquinol methylase, mitochondrial from Schizosaccharomyces pombe (strain 972 / ATCC 24843) (Fission yeast).